The primary structure comprises 434 residues: Prenyltransferase fogH (434 aa).

Glu86 serves as a coordination point for L-tryptophan. Substrate is bound by residues Arg101, Arg248, Lys250, Tyr252, and Tyr346.

It belongs to the tryptophan dimethylallyltransferase family.

The protein operates within secondary metabolite biosynthesis. Prenyltransferase; part of the gene cluster that mediates the biosynthesis of flavoglaucin and congeners (including aspergin, dihydroauroglaucin and auroglaucin), prenylated salicylaldehyde derivatives carrying a saturated or an unsaturated C-7 side chain. The PKS fogA releases the carboxylic acid (8E,10E,12E)-3,5,7-trihydroxytetradeca-8,10,12-trienoic acid as its product, as well as derivatives with one and two double bonds. FogA is indeed able to reduce the initial triketide, thus being at least partially responsible for the differently saturated heptyl side chains of flavoglaucin congeners. The oxidoreductases fogB, fogC and fogD modify the nascent polyketide in fogA-bound form and, together, fogA, fogB, fogC and fogD are necessary for the formation of the aromatic core and the cyclized PKS products are released as salicyl alcohols. In particular, fogB is responsible for oxidation of a hydroxyl group or reduction of remaining double bond(s) at the C-7 residue whereas fogD is probably involved in the reductive release of the modified PKS products. The cytochrome P450 monooxygenase fogE is then responsible for the hydroxylation at C-3 of the benzene ring. The fogE products are substrates of the prenyltransferase fogH and the prenylated benzyl alcohols are subsequently oxidized by the fogF to produce the final aryl aldehydes flavoglaucin and congeners. The short-chain dehydrogenase fogG does not seem to be involved in the biosynthesis of the prenylated salicylaldehyde derivatives. This chain is Prenyltransferase fogH, found in Aspergillus ruber (strain CBS 135680).